Here is a 376-residue protein sequence, read N- to C-terminus: Phosphoglycerate kinase (376 aa).

Residues valine 1, aspartate 2, phenylalanine 3, asparagine 4, arginine 17, serine 40, histidine 41, glycine 43, arginine 44, leucine 99, arginine 100, histidine 147, and arginine 148 each contribute to the (2R)-3-phosphoglycerate site. Position 191 (glycine 191) interacts with ADP. Glycine 191 is a CDP binding site. Residues alanine 192 and lysine 193 each contribute to the AMP site. ATP is bound at residue alanine 192. Alanine 192 contributes to the Mg(2+) binding site. Residue aspartate 196 coordinates CDP. Aspartate 196 lines the Mg(2+) pocket. Lysine 197 serves as a coordination point for AMP. Residue lysine 197 participates in ATP binding. Glycine 215 lines the ADP pocket. Glycine 215 is a CDP binding site. Residues glycine 216 and glycine 290 each contribute to the AMP site. Positions 216 and 290 each coordinate ATP. Positions 315 and 320 each coordinate CDP. Phenylalanine 320 contributes to the ADP binding site. Glutamate 321 contacts AMP. Residues glutamate 321, aspartate 352, and threonine 353 each contribute to the ATP site. Aspartate 352 provides a ligand contact to Mg(2+).

This sequence belongs to the phosphoglycerate kinase family. Monomer. Mg(2+) is required as a cofactor.

The catalysed reaction is (2R)-3-phosphoglycerate + ATP = (2R)-3-phospho-glyceroyl phosphate + ADP. It participates in carbohydrate degradation; glycolysis; pyruvate from D-glyceraldehyde 3-phosphate: step 2/5. The chain is Phosphoglycerate kinase (PGK) from Glaucoma chattoni.